A 283-amino-acid chain; its full sequence is N-terminal Xaa-Pro-Lys N-methyltransferase 2 (283 aa).

S-adenosyl-L-methionine-binding positions include Gly-124, Arg-129, Asp-146, 174–175 (LQ), Gln-190, and His-195.

Belongs to the methyltransferase superfamily. NTM1 family.

It is found in the nucleus. It catalyses the reaction N-terminal L-alanyl-L-prolyl-L-lysyl-[protein] + S-adenosyl-L-methionine = N-terminal N-methyl-L-alanyl-L-prolyl-L-lysyl-[protein] + S-adenosyl-L-homocysteine + H(+). The catalysed reaction is N-terminal L-prolyl-L-prolyl-L-lysyl-[protein] + S-adenosyl-L-methionine = N-terminal N-methyl-L-prolyl-L-prolyl-L-lysyl-[protein] + S-adenosyl-L-homocysteine + H(+). It carries out the reaction N-terminal L-seryl-L-prolyl-L-lysyl-[protein] + S-adenosyl-L-methionine = N-terminal N-methyl-L-seryl-L-prolyl-L-lysyl-[protein] + S-adenosyl-L-homocysteine + H(+). Alpha N-methyltransferase that methylates the N-terminus of target proteins containing the N-terminal motif [Ala/Pro/Ser]-Pro-Lys when the initiator Met is cleaved. Specifically catalyzes monomethylation of exposed alpha-amino group of Ala or Ser residue in the [Ala/Ser]-Pro-Lys motif and Pro in the Pro-Pro-Lys motif. Predominantly functions as a mono-methyltransferase but is also able to di-/tri-methylate the GPKRIA peptide and di-methylate the PPKRIA peptide (in vitro). May activate NTMT1 by priming its substrates for trimethylation. This is N-terminal Xaa-Pro-Lys N-methyltransferase 2 from Homo sapiens (Human).